A 189-amino-acid polypeptide reads, in one-letter code: Small ribosomal subunit protein uS5 (189 aa).

The S5 DRBM domain maps to 20-83 (FVDRLVHINR…ESAKRALIRV (64 aa)).

The protein belongs to the universal ribosomal protein uS5 family. Part of the 30S ribosomal subunit. Contacts proteins S4 and S8.

With S4 and S12 plays an important role in translational accuracy. Functionally, located at the back of the 30S subunit body where it stabilizes the conformation of the head with respect to the body. The protein is Small ribosomal subunit protein uS5 of Beijerinckia indica subsp. indica (strain ATCC 9039 / DSM 1715 / NCIMB 8712).